Reading from the N-terminus, the 295-residue chain is MPSEKDRAKKNLVQRLALKSCLAKETLSEFLGTFIMIVLGCGSIAQAVLSREKAGGIITINIGFATAVVMALYATFGVSGGHINPAVSFAMCTFGRMEWFKFPFYVGAQLLGAFVGAATVFGIYYDGLMAFADGKLLITGENGTAFIFATYPKPFVSVPGAFVDQVVSTMFLLLIVFAIFDSRNLGVPRGLEPIVIGLLIIVISCSLGLNSGCAMNPARDLSPRLFTALAGWGFEVFTFGNNFWWIPVVGPMIGAVLGGLIYVLFIQMHHSNPDPEVKAEPAENNLEKHELSVIM.

Topologically, residues 1 to 24 (MPSEKDRAKKNLVQRLALKSCLAK) are cytoplasmic. The helical transmembrane segment at 25 to 43 (ETLSEFLGTFIMIVLGCGS) threads the bilayer. Topologically, residues 44–57 (IAQAVLSREKAGGI) are extracellular. The helical transmembrane segment at 58-77 (ITINIGFATAVVMALYATFG) threads the bilayer. Over 78-79 (VS) the chain is Cytoplasmic. Positions 80–92 (GGHINPAVSFAMC) form an intramembrane region, discontinuously helical. The NPA 1 signature appears at 84–86 (NPA). Residues 93-98 (TFGRME) lie on the Cytoplasmic side of the membrane. The helical transmembrane segment at 99–123 (WFKFPFYVGAQLLGAFVGAATVFGI) threads the bilayer. At 124–160 (YYDGLMAFADGKLLITGENGTAFIFATYPKPFVSVPG) the chain is on the extracellular side. Residues 161–178 (AFVDQVVSTMFLLLIVFA) form a helical membrane-spanning segment. Residues 179 to 190 (IFDSRNLGVPRG) lie on the Cytoplasmic side of the membrane. The helical transmembrane segment at 191–207 (LEPIVIGLLIIVISCSL) threads the bilayer. Over 208–210 (GLN) the chain is Extracellular. Positions 211-225 (SGCAMNPARDLSPRL) form an intramembrane region, discontinuously helical. The short motif at 216–218 (NPA) is the NPA 2 element. Topologically, residues 226–243 (FTALAGWGFEVFTFGNNF) are extracellular. A helical membrane pass occupies residues 244-264 (WWIPVVGPMIGAVLGGLIYVL). The Cytoplasmic portion of the chain corresponds to 265 to 295 (FIQMHHSNPDPEVKAEPAENNLEKHELSVIM).

The protein belongs to the MIP/aquaporin (TC 1.A.8) family. Homotetramer; each monomer provides an independent glycerol/water pore.

Its subcellular location is the cell membrane. The protein resides in the basolateral cell membrane. It catalyses the reaction glycerol(in) = glycerol(out). The catalysed reaction is H2O(in) = H2O(out). The enzyme catalyses urea(in) = urea(out). It carries out the reaction (S)-lactate(in) = (S)-lactate(out). It catalyses the reaction NH4(+)(in) = NH4(+)(out). The catalysed reaction is uracil(in) = uracil(out). The enzyme catalyses adenine(out) = adenine(in). It carries out the reaction 3-hydroxybutanoate(in) = 3-hydroxybutanoate(out). It catalyses the reaction D-sorbitol(in) = D-sorbitol(out). The catalysed reaction is D-mannitol(in) = D-mannitol(out). The enzyme catalyses H2O2(out) = H2O2(in). It carries out the reaction arsenite(in) = arsenite(out). It catalyses the reaction selenite(in) = selenite(out). Functionally, aquaglyceroporins form homotetrameric transmembrane channels, with each monomer independently mediating glycerol and water transport across the plasma membrane along their osmotic gradient. AQP9 is the primary route for glycerol uptake in hepatocytes, supporting hepatic gluconeogenesis. It exhibits broad specificity and may transport various small, non-charged solutes, including carbamides, polyols, purines, and pyrimidines. AQP9 may also facilitate hepatic urea extrusion. Due to its permeability to lactate, AQP9 might participate in the astrocyte-to-neuron lactate shuttle, supplying neurons with energy. Additionally, AQP9 is permeable to arsenite, contributing to arsenic excretion by the liver and providing partial protection against arsenic toxicity. It is also permeable to H2O2 in vivo. Could also be permeable to ammonium. The sequence is that of Aquaporin-9 from Mus musculus (Mouse).